The primary structure comprises 772 residues: Elongin-A (772 aa).

In terms of domain architecture, TFIIS N-terminal spans 4-79 (ESALQVVEKL…AQWKKLVPVE (76 aa)). Composition is skewed to basic and acidic residues over residues 79-105 (ERNAEPDEQDFEKSNSRKRPRDALQKE) and 136-156 (LSELERPHKVSHGHERRDERK). Disordered regions lie at residues 79–403 (ERNA…FEQP) and 418–466 (KKKK…EKPA). The residue at position 196 (Ser-196) is a Phosphoserine. Basic and acidic residues-rich tracts occupy residues 226 to 235 (QERHLGEPHG), 253 to 269 (RPVDAKSDEKASVVSRE), 275 to 308 (LSKEENRRPPSGDNAREKPPSSGVKKEKDREGSS), 321 to 343 (SDNHLKKPKHRDPEKAKLDKSKQ), and 372 to 384 (PEGKVKTNLDRKS). Residues Ser-384 and Ser-387 each carry the phosphoserine modification. Thr-394 carries the phosphothreonine modification. Lys-434 carries the N6-acetyllysine modification. Residues 434–443 (KGLKKNDSKS) are compositionally biased toward basic and acidic residues. The residue at position 516 (Ser-516) is a Phosphoserine. Residues 522-681 (EAGFTGRRMN…PPRDVRRRQE (160 aa)) form an activation domain region. The BC-box stretch occupies residues 550-559 (TLHQQCIRVL). In terms of domain architecture, F-box spans 566–610 (IFEVGGVPYSVLEPVLERCTPDQLYRIEEYNHVLIEETDQLWKVH). Positions 674–732 (RDVRRRQEKFGTGGAAVPEKIKIKPAPYPMGSSHASASSISFNPSPEEPAYDGPSTSSA) are disordered. Over residues 705-714 (SSHASASSIS) the composition is skewed to low complexity.

Heterotrimer of an A (ELOA, ELOA2 or ELOA3P), ELOB and ELOC subunit. Part of a multisubunit ubiquitin ligase complex consisting of elongin BC complex (ELOB and ELOC), elongin A/ELOA, RBX1 and CUL5. Interacts with ERCC6; the interaction is induced by DNA damaging agents or inhibitors of RNA polymerase II elongation. Interacts (via BC-box) with CUL5.

Its subcellular location is the nucleus. SIII, also known as elongin, is a general transcription elongation factor that increases the RNA polymerase II transcription elongation past template-encoded arresting sites. Subunit A is transcriptionally active and its transcription activity is strongly enhanced by binding to the dimeric complex of the SIII regulatory subunits B and C (elongin BC complex). Its function is as follows. As part of a multisubunit complex composed of elongin BC complex (ELOB and ELOC), elongin A/ELOA, RBX1 and CUL5; polyubiquitinates monoubiquitinated POLR2A. This chain is Elongin-A, found in Homo sapiens (Human).